The primary structure comprises 396 residues: Elongation factor Tu 1 (396 aa).

The tr-type G domain occupies 10–206; that stretch reads KPHVNVGTIG…QIDSYIPEPE (197 aa). Positions 19–26 are G1; it reads GHIDHGKT. A GTP-binding site is contributed by 19–26; it reads GHIDHGKT. A Mg(2+)-binding site is contributed by T26. Residues 60 to 64 are G2; it reads GITIA. The interval 81–84 is G3; sequence DCPG. GTP contacts are provided by residues 81–85 and 136–139; these read DCPGH and NKCD. Positions 136–139 are G4; that stretch reads NKCD. Positions 174-176 are G5; sequence SAL.

This sequence belongs to the TRAFAC class translation factor GTPase superfamily. Classic translation factor GTPase family. EF-Tu/EF-1A subfamily. In terms of assembly, monomer.

It is found in the cytoplasm. The enzyme catalyses GTP + H2O = GDP + phosphate + H(+). Functionally, GTP hydrolase that promotes the GTP-dependent binding of aminoacyl-tRNA to the A-site of ribosomes during protein biosynthesis. This chain is Elongation factor Tu 1, found in Desulfotalea psychrophila (strain LSv54 / DSM 12343).